Here is a 461-residue protein sequence, read N- to C-terminus: Cysteine--tRNA ligase (461 aa).

Cys-28 contacts Zn(2+). The 'HIGH' region signature appears at 30–40 (ITVYDLCHIGH). Zn(2+) is bound by residues Cys-209, His-234, and Glu-238. The 'KMSKS' region signature appears at 266–270 (KMSKS). Lys-269 is an ATP binding site.

Belongs to the class-I aminoacyl-tRNA synthetase family. Monomer. It depends on Zn(2+) as a cofactor.

It localises to the cytoplasm. The catalysed reaction is tRNA(Cys) + L-cysteine + ATP = L-cysteinyl-tRNA(Cys) + AMP + diphosphate. The sequence is that of Cysteine--tRNA ligase from Cronobacter sakazakii (strain ATCC BAA-894) (Enterobacter sakazakii).